The following is a 440-amino-acid chain: MREYNFDGLVGPTHNYGGLSPGNLASQSHVGEPSHPRDAALQGLEKMRFVSALGVGQAVLPPQPRPSLHALRALGFTGSDEEVITRAAREAEHLLRLTSSASSMWTANAATVAPSADTADGRVHLTPANLSQMYHRAIEAETTHSVLRAIFSNEKYFAVHAPLPGSGHFADEGAANHTRLATPGHAGVHLLAWGRSAWQDVQGPSRFPARQTLEASQALARLHQLDAKSVLFPQQHPEGIDAGAFHTDVLAVGNERFLMLHELAFVDHAGLLAVLREKLGQDFRAVVATKAELPAKDAVKAYPFNSQVLTLPDGTMAIVAPIESRETPAARQFLERVVAEDTPVKAVHYLDVRQSMNNGGGPACLRQRVWLTDEERGAIKADVFYTPALHDSLAGWVRRHYREVLRPKDLQDPQLARETMTALDELTRILNLGSVYDFQR.

Substrate is bound by residues 17–26 (GGLSPGNLAS), asparagine 108, and 135–136 (HR). A disordered region spans residues 17–37 (GGLSPGNLASQSHVGEPSHPR). Glutamate 172 is a catalytic residue. Arginine 210 provides a ligand contact to substrate. Histidine 246 is a catalytic residue. Substrate is bound by residues aspartate 248 and asparagine 358. Cysteine 364 (nucleophile) is an active-site residue.

This sequence belongs to the succinylarginine dihydrolase family. As to quaternary structure, homodimer.

It carries out the reaction N(2)-succinyl-L-arginine + 2 H2O + 2 H(+) = N(2)-succinyl-L-ornithine + 2 NH4(+) + CO2. Its pathway is amino-acid degradation; L-arginine degradation via AST pathway; L-glutamate and succinate from L-arginine: step 2/5. Functionally, catalyzes the hydrolysis of N(2)-succinylarginine into N(2)-succinylornithine, ammonia and CO(2). This chain is N-succinylarginine dihydrolase, found in Myxococcus xanthus (strain DK1622).